A 517-amino-acid chain; its full sequence is DNA-(apurinic or apyrimidinic site) endonuclease 2 (517 aa).

Positions 9 and 34 each coordinate Mg(2+). The short motif at 82–90 (EEGLSGVFC) is the Claspin-like CKB motif element. Tyr142 is a catalytic residue. 4 residues coordinate Mg(2+): Asp183, Asn185, Asp299, and His300. Catalysis depends on Asp183, which acts as the Proton donor/acceptor. His300 serves as the catalytic Proton acceptor. The segment covering 347 to 362 (GNTTEESSELTGTPSF) has biased composition (polar residues). The disordered stretch occupies residues 347–366 (GNTTEESSELTGTPSFTEGA). The PCNA interacting protein (PIP) box signature appears at 395–402 (QGNLLSFF). Positions 463, 466, 489, and 503 each coordinate Zn(2+). The GRF-type zinc finger occupies 463–512 (CKGHSEPCVLRTVKKAGPNCGRQFYVCARPEGHSSNPQARCNFFLWLTKK).

It belongs to the DNA repair enzymes AP/ExoA family. In terms of assembly, interacts (via PIP box and GRF-type Zinc finger domain) with pcna; the interaction is required for 3 -5 SSB end resection, assembly of a checkpoint protein complex to SSB sites, and SSB signaling. Interacts with chek1. Mg(2+) is required as a cofactor. Mn(2+) serves as cofactor. In terms of tissue distribution, expressed in eggs (at protein level).

The protein resides in the nucleus. The protein localises to the chromosome. It is found in the cytoplasm. Its subcellular location is the mitochondrion. It catalyses the reaction Exonucleolytic cleavage in the 3'- to 5'-direction to yield nucleoside 5'-phosphates.. 3'-5' nuclease activity is stimulated in presence of pcna. Its function is as follows. Functions as a weak apurinic/apyrimidinic (AP) endodeoxyribonuclease in the DNA base excision repair (BER) pathway of DNA lesions induced by oxidative and alkylating agents. Initiates repair of AP sites in DNA by catalyzing hydrolytic incision of the phosphodiester backbone immediately adjacent to the damage, generating a single-strand break with 5'-deoxyribose phosphate and 3'-hydroxyl ends. Exhibits 3'-5' exonuclease activity on a 3' DNA substrate; nuclease activity is stimulated by interaction with pcna. Has a preference for the 3' recessed ends over blunt-ended substrates, in both the presence and the absence of pcna. Generates single-stranded DNA (ssDNA) via 3'-5' single-strand break (SSB) end resection, thereby promoting a DNA damage response via replication protein A (rpa2)-binding to ssDNA and the recruitment of a checkpoint protein complex, including atr, atr-interacting protein atrip, and rad9, to damage sites following oxidative stress. Plays a role in reversing blocked 3' DNA ends, problematic lesions that preclude DNA synthesis. Required for chek1 phosphorylation induced by hydrogen peroxide but not by stalled replication forks. The protein is DNA-(apurinic or apyrimidinic site) endonuclease 2 of Xenopus laevis (African clawed frog).